Consider the following 269-residue polypeptide: Phosphatidylglycerol--prolipoprotein diacylglyceryl transferase (269 aa).

Helical transmembrane passes span 10-30 (VALA…LIGI), 56-76 (MVFW…VLFY), 92-112 (WKGG…AWWF), 120-140 (FFEL…AGRI), 174-194 (PSQL…LWLF), 202-222 (MAVS…VEFV), and 237-257 (LTMG…LIWL). Arginine 139 contributes to the a 1,2-diacyl-sn-glycero-3-phospho-(1'-sn-glycerol) binding site.

Belongs to the Lgt family.

Its subcellular location is the cell inner membrane. It carries out the reaction L-cysteinyl-[prolipoprotein] + a 1,2-diacyl-sn-glycero-3-phospho-(1'-sn-glycerol) = an S-1,2-diacyl-sn-glyceryl-L-cysteinyl-[prolipoprotein] + sn-glycerol 1-phosphate + H(+). The protein operates within protein modification; lipoprotein biosynthesis (diacylglyceryl transfer). Functionally, catalyzes the transfer of the diacylglyceryl group from phosphatidylglycerol to the sulfhydryl group of the N-terminal cysteine of a prolipoprotein, the first step in the formation of mature lipoproteins. The sequence is that of Phosphatidylglycerol--prolipoprotein diacylglyceryl transferase from Pseudomonas fluorescens (strain ATCC BAA-477 / NRRL B-23932 / Pf-5).